Here is a 135-residue protein sequence, read N- to C-terminus: MKLLDTTVLLDFLSGEEEKVETIEQFFEELSQKGEKLFVPEEVIIELVYFLEHGYKWEREDIYEVVETILNDELFNVELKPFIREAIKLYSKRQGTFLDCLKSVKAKKMGIKEVVSFGRRFKKLGFKTVNPYEES.

Positions 3-130 constitute a PINc domain; it reads LLDTTVLLDF…FKKLGFKTVN (128 aa). Residue Asp-5 participates in Mg(2+) binding.

It belongs to the PINc/VapC protein family. Requires Mg(2+) as cofactor.

Toxic component of a type II toxin-antitoxin (TA) system. An RNase. This chain is VapC ribonuclease aq_1901, found in Aquifex aeolicus (strain VF5).